We begin with the raw amino-acid sequence, 1014 residues long: Disease resistance protein RGA4 (1014 aa).

Positions 1-182 (MEAALLSGFI…PRIHEADLVG (182 aa)) are structured coiled coil (CC) domain. Residues 105–145 (RTVRATKKLLQTNQHLAQELQRLKRMVEEANQRKQRYTAAA) are a coiled coil. The 278-residue stretch at 189–466 (ELLEQLAERQ…WLAEGFVEPV (278 aa)) folds into the NB-ARC domain. LRR repeat units follow at residues 484 to 506 (RNIIEPINVSNNDKVKTCQTYGM), 507 to 530 (MREFISHMSISQNFVTFFCDDKFL), 531 to 552 (PKYVRRLSLHGDTVVNGDNFNG), 580 to 602 (LRVLDLEKCDDLNDDHLKEICNL), 603 to 624 (VLLKYLSLGGNISKLPKDIAKL), 625 to 647 (KDLEALDVRRSKVKIMPVEVFGL), 701 to 725 (MNKLRKLKIWCTSSAGSTDWTDLRE), 762 to 784 (PCYLSSLKLHGNFPQLPQFVTSL), 785 to 807 (RGLKELCLSSTKFTTGLLEALSN), 808 to 833 (LSYLQYLKLVADELEKFIIKVQGFPR), and 854 to 877 (LPFLVTLQLLCKDLHGLSDIKIEC).

The protein belongs to the disease resistance NB-LRR family. In terms of tissue distribution, expressed in leaves.

Its function is as follows. Probable disease resistance protein. Resistance proteins guard the plant against pathogens that contain an appropriate avirulence protein via an indirect interaction with this avirulence protein. That triggers a defense system including the hypersensitive response, which restricts the pathogen growth. At the opposite of cultivars Aichi asahi and Sasanishiki, the cultivars Nipponbare, Mokoto and Hitomebore don't recognize the effector avirulence protein AVR-Pia from M.oryzae. This Oryza sativa subsp. japonica (Rice) protein is Disease resistance protein RGA4.